Consider the following 307-residue polypeptide: Recombination-associated protein RdgC (307 aa).

The protein belongs to the RdgC family.

The protein resides in the cytoplasm. The protein localises to the nucleoid. In terms of biological role, may be involved in recombination. In Colwellia psychrerythraea (strain 34H / ATCC BAA-681) (Vibrio psychroerythus), this protein is Recombination-associated protein RdgC.